Here is a 911-residue protein sequence, read N- to C-terminus: Chromatin assembly factor 1 subunit A (911 aa).

The binds PCNA stretch occupies residues M1 to A31. Residues H166–T200 form a disordered region. The tract at residues D176–E327 is binds CBX1 and CBX3 chromo shadow domains. The segment covering G186–T200 has biased composition (polar residues). Residues S190 and S208 each carry the phosphoserine modification. The short motif at F217 to L230 is the PxVxL motif element. Disordered regions lie at residues S250–K408 and D578–G618. A compositionally biased stretch (low complexity) spans L265 to G281. Phosphoserine is present on S293. Over residues S310–K408 the composition is skewed to basic and acidic residues. 2 stretches are compositionally biased toward acidic residues: residues D578–G589 and G597–G612. The tract at residues S621–F657 is necessary for homodimerization and competence for chromatin assembly. A binds to p60 region spans residues H639–K911. Phosphoserine is present on S776. Disordered stretches follow at residues P819–K843 and G866–D886. Residues G827–P839 show a composition bias toward polar residues. The residue at position 838 (T838) is a Phosphothreonine. A compositionally biased stretch (acidic residues) spans D876–D886.

The protein belongs to the CHAF1A family. In terms of assembly, homodimer. Part of the CAF-1 complex that contains RBBP4, CHAF1B and CHAF1A. CHAF1A binds directly to CHAF1B. Only minor amounts of RBBP4 are complexed with CHAF1A and CHAF1B in G1 phase. Interacts with PCNA; the interaction is direct. Interacts (via the PxVxL motif) with CBX5; the interaction is direct. Interacts with MBD1. Interacts with histones H3.1, H3.2 and H3.1t.

Its subcellular location is the nucleus. Functionally, acts as a component of the histone chaperone complex chromatin assembly factor 1 (CAF-1), which assembles histone octamers onto DNA during replication and repair. CAF-1 performs the first step of the nucleosome assembly process, bringing newly synthesized histones H3 and H4 to replicating DNA; histones H2A/H2B can bind to this chromatin precursor subsequent to DNA replication to complete the histone octamer. It may play a role in heterochromatin maintenance in proliferating cells by bringing newly synthesized cbx proteins to heterochromatic DNA replication foci. The polypeptide is Chromatin assembly factor 1 subunit A (Mus musculus (Mouse)).